The chain runs to 221 residues: Membrane-bound lytic murein transglycosylase E (221 aa).

It belongs to the transglycosylase Slt family.

The catalysed reaction is Exolytic cleavage of the (1-&gt;4)-beta-glycosidic linkage between N-acetylmuramic acid (MurNAc) and N-acetylglucosamine (GlcNAc) residues in peptidoglycan, from either the reducing or the non-reducing ends of the peptidoglycan chains, with concomitant formation of a 1,6-anhydrobond in the MurNAc residue.. In terms of biological role, murein-degrading enzyme. May play a role in recycling of muropeptides during cell elongation and/or cell division. This chain is Membrane-bound lytic murein transglycosylase E (mltE), found in Buchnera aphidicola subsp. Acyrthosiphon pisum (strain APS) (Acyrthosiphon pisum symbiotic bacterium).